The primary structure comprises 259 residues: 3'-5' ssDNA/RNA exonuclease TatD (259 aa).

Residues Glu-92, His-128, and His-153 each coordinate a divalent metal cation.

It belongs to the metallo-dependent hydrolases superfamily. TatD-type hydrolase family. TatD subfamily. In terms of assembly, monomer. It depends on Mg(2+) as a cofactor.

It localises to the cytoplasm. Functionally, 3'-5' exonuclease that prefers single-stranded DNA and RNA. May play a role in the H(2)O(2)-induced DNA damage repair. The chain is 3'-5' ssDNA/RNA exonuclease TatD from Erwinia amylovora (strain ATCC 49946 / CCPPB 0273 / Ea273 / 27-3).